Consider the following 298-residue polypeptide: Cyclin-dependent kinase 2 (298 aa).

The 283-residue stretch at 4 to 286 (FQKVEKIGEG…AKNALVHRFF (283 aa)) folds into the Protein kinase domain. ATP-binding positions include 10–18 (IGEGTYGVV), K33, 81–83 (EFL), and D86. The residue at position 14 (T14) is a Phosphothreonine. Residue Y15 is modified to Phosphotyrosine. D127 acts as the Proton acceptor in catalysis. Residues 129 to 132 (KPQN) and D145 contribute to the ATP site. T160 bears the Phosphothreonine; by CAK mark.

This sequence belongs to the protein kinase superfamily. CMGC Ser/Thr protein kinase family. CDC2/CDKX subfamily.

The catalysed reaction is L-seryl-[protein] + ATP = O-phospho-L-seryl-[protein] + ADP + H(+). The enzyme catalyses L-threonyl-[protein] + ATP = O-phospho-L-threonyl-[protein] + ADP + H(+). With respect to regulation, phosphorylation at Thr-14 or Tyr-15 inactivates the enzyme, while phosphorylation at Thr-160 activates it. Functionally, serine/threonine-protein kinase involved in the control of the cell cycle; essential for meiosis, but dispensable for mitosis. Triggers duplication of centrosomes and DNA. Acts at the G1-S transition to promote the E2F transcriptional program and the initiation of DNA synthesis, and modulates G2 progression; controls the timing of entry into mitosis/meiosis by controlling the subsequent activation of cyclin B/CDK1 by phosphorylation, and coordinates the activation of cyclin B/CDK1 at the centrosome and in the nucleus. Crucial role in orchestrating a fine balance between cellular proliferation, cell death, and DNA repair in embryonic stem cells (ESCs). Activity of CDK2 is maximal during S phase and G2; activated by interaction with cyclin E during the early stages of DNA synthesis to permit G1-S transition, and subsequently activated by cyclin A2 (cyclin A1 in germ cells) during the late stages of DNA replication to drive the transition from S phase to mitosis, the G2 phase. The protein is Cyclin-dependent kinase 2 (cdk2) of Carassius auratus (Goldfish).